Reading from the N-terminus, the 461-residue chain is tRNA modification GTPase MnmE (461 aa).

Positions 20, 85, and 124 each coordinate (6S)-5-formyl-5,6,7,8-tetrahydrofolate. One can recognise a TrmE-type G domain in the interval 221–383 (GIPVAIIGET…LQQLLTEVSS (163 aa)). Residue Asn-231 participates in K(+) binding. GTP contacts are provided by residues 231-236 (NAGKST), 250-256 (SDIHGTT), and 275-278 (DTAG). Ser-235 contacts Mg(2+). K(+)-binding residues include Ser-250, Ile-252, and Thr-255. Residue Thr-256 coordinates Mg(2+). Residue Lys-461 participates in (6S)-5-formyl-5,6,7,8-tetrahydrofolate binding.

This sequence belongs to the TRAFAC class TrmE-Era-EngA-EngB-Septin-like GTPase superfamily. TrmE GTPase family. As to quaternary structure, homodimer. Heterotetramer of two MnmE and two MnmG subunits. Requires K(+) as cofactor.

Its subcellular location is the cytoplasm. Exhibits a very high intrinsic GTPase hydrolysis rate. Involved in the addition of a carboxymethylaminomethyl (cmnm) group at the wobble position (U34) of certain tRNAs, forming tRNA-cmnm(5)s(2)U34. This is tRNA modification GTPase MnmE from Parabacteroides distasonis (strain ATCC 8503 / DSM 20701 / CIP 104284 / JCM 5825 / NCTC 11152).